We begin with the raw amino-acid sequence, 360 residues long: Putative mRNA-decapping protein (360 aa).

A CCHC-type zinc finger spans residues 11–28; the sequence is HICSNCGRSGHEFRNCIE. One can recognise a Nudix hydrolase domain in the interval 163–347; it reads YKYDNILYHF…KKRILTRVYL (185 aa). The Nudix box motif lies at 242 to 264; it reads GRRDKRSEENMVCACREFEEETG. Glu249 provides a ligand contact to Mg(2+). The active-site Nucleophile is the Glu258. Glu262 is a Mg(2+) binding site.

Belongs to the Nudix hydrolase family. DIPP subfamily. Mg(2+) is required as a cofactor. Requires Mn(2+) as cofactor.

It catalyses the reaction diphospho-myo-inositol polyphosphate + H2O = myo-inositol polyphosphate + phosphate.. In terms of biological role, might function as a decapping enzyme required for the removal of the 5'-end m7GpppN cap tethered to viral and host mRNAs to allow their decay in cells. In addition to the mRNA cap, probably also efficiently hydrolyzes diphosphoinositol polyphosphates. This chain is Putative mRNA-decapping protein, found in Acanthamoeba polyphaga (Amoeba).